The primary structure comprises 407 residues: tRNA pseudouridine synthase 4 (407 aa).

The interval 83 to 105 is disordered; sequence FRPAPPHPNDRNRRRRKSNRLPD. Residue Asp115 is the Nucleophile of the active site. Residues 274 to 298 are disordered; the sequence is TEQDINPQDGDEKINAKSPTTNSVT. Ser291 carries the phosphoserine modification. At Thr293 the chain carries Phosphothreonine. Ser296 bears the Phosphoserine mark. Thr406 is subject to Phosphothreonine.

It belongs to the pseudouridine synthase TruB family.

Its subcellular location is the nucleus. It localises to the mitochondrion. It catalyses the reaction uridine(55) in tRNA = pseudouridine(55) in tRNA. The enzyme catalyses a uridine in mRNA = a pseudouridine in mRNA. Its function is as follows. Responsible for synthesis of pseudouridine from uracil-55 in the psi GC loop of transfer RNAs. Also catalyzes pseudouridylation of mRNAs with the consensus sequence 5'-GGUUCRA-3'. The chain is tRNA pseudouridine synthase 4 from Schizosaccharomyces pombe (strain 972 / ATCC 24843) (Fission yeast).